The following is a 169-amino-acid chain: UPF0303 protein Oant_1766 (169 aa).

Belongs to the UPF0303 family.

The chain is UPF0303 protein Oant_1766 from Brucella anthropi (strain ATCC 49188 / DSM 6882 / CCUG 24695 / JCM 21032 / LMG 3331 / NBRC 15819 / NCTC 12168 / Alc 37) (Ochrobactrum anthropi).